The chain runs to 513 residues: MTRVINLDGESLTIEDVIAIARQGVACRIDDSAIEAVNASRKIVDDIVSEKRVVYGVTTGFGSLCNVSISPEDTVQLQENLIRTHASGFGDPLPEDAVRAIMLIRINSLVKGYSGIRLSTIEKLLELLNKGVHPYIPEKGSLGASGDLAPLAHMVLPMLGLGKAYYKGELLSGQEALDKAGIDKISLAAKEGLALINGTTVLTAIGALATYDAIQLLKLSDLAGALSLEVHNGITSPFEENLHTIRPQSGQLATARNIRNLLEGSQNTTVATQSRVQDPYTLRCLPQIHGASKDSIAYVKSKVDIEINSVTDNPIICKDGHVISGGNFHGEPMAQPFDFLGIAISEIGNVSERRVERLVNSQLSKLPSFLVKYPGLNSGFMITQYACASLASENKVLAHPASVDSIPSCENQEDFVSMGTTAARKAFEILKNSRRIVATEIMAACQALDLKPENHELGKGTKVAYDLFRKEVNFIEHDKHIEIYDELNKASAVIEDPSFLEAVEQAVELSIQF.

A cross-link (5-imidazolinone (Ala-Gly)) is located at residues 144 to 146; sequence ASG. S145 bears the 2,3-didehydroalanine (Ser) mark.

The protein belongs to the PAL/histidase family. In terms of processing, contains an active site 4-methylidene-imidazol-5-one (MIO), which is formed autocatalytically by cyclization and dehydration of residues Ala-Ser-Gly.

Its subcellular location is the cytoplasm. It catalyses the reaction L-histidine = trans-urocanate + NH4(+). It functions in the pathway amino-acid degradation; L-histidine degradation into L-glutamate; N-formimidoyl-L-glutamate from L-histidine: step 1/3. This is Histidine ammonia-lyase from Streptococcus pyogenes serotype M6 (strain ATCC BAA-946 / MGAS10394).